Reading from the N-terminus, the 317-residue chain is Transaldolase (317 aa).

The active-site Schiff-base intermediate with substrate is Lys126.

This sequence belongs to the transaldolase family. Type 1 subfamily. As to quaternary structure, homodimer.

It is found in the cytoplasm. The enzyme catalyses D-sedoheptulose 7-phosphate + D-glyceraldehyde 3-phosphate = D-erythrose 4-phosphate + beta-D-fructose 6-phosphate. It functions in the pathway carbohydrate degradation; pentose phosphate pathway; D-glyceraldehyde 3-phosphate and beta-D-fructose 6-phosphate from D-ribose 5-phosphate and D-xylulose 5-phosphate (non-oxidative stage): step 2/3. In terms of biological role, transaldolase is important for the balance of metabolites in the pentose-phosphate pathway. The protein is Transaldolase of Burkholderia ambifaria (strain ATCC BAA-244 / DSM 16087 / CCUG 44356 / LMG 19182 / AMMD) (Burkholderia cepacia (strain AMMD)).